Consider the following 175-residue polypeptide: Large ribosomal subunit protein uL10 (175 aa).

The protein belongs to the universal ribosomal protein uL10 family. In terms of assembly, part of the ribosomal stalk of the 50S ribosomal subunit. The N-terminus interacts with L11 and the large rRNA to form the base of the stalk. The C-terminus forms an elongated spine to which L12 dimers bind in a sequential fashion forming a multimeric L10(L12)X complex.

Its function is as follows. Forms part of the ribosomal stalk, playing a central role in the interaction of the ribosome with GTP-bound translation factors. This chain is Large ribosomal subunit protein uL10, found in Mycobacterium sp. (strain KMS).